Consider the following 281-residue polypeptide: Aspartate/glutamate leucyltransferase (281 aa).

This sequence belongs to the R-transferase family. Bpt subfamily.

The protein localises to the cytoplasm. It carries out the reaction N-terminal L-glutamyl-[protein] + L-leucyl-tRNA(Leu) = N-terminal L-leucyl-L-glutamyl-[protein] + tRNA(Leu) + H(+). It catalyses the reaction N-terminal L-aspartyl-[protein] + L-leucyl-tRNA(Leu) = N-terminal L-leucyl-L-aspartyl-[protein] + tRNA(Leu) + H(+). Functions in the N-end rule pathway of protein degradation where it conjugates Leu from its aminoacyl-tRNA to the N-termini of proteins containing an N-terminal aspartate or glutamate. The polypeptide is Aspartate/glutamate leucyltransferase (Paracoccus denitrificans (strain Pd 1222)).